The sequence spans 508 residues: Lysine--tRNA ligase (508 aa).

Mg(2+)-binding residues include glutamate 418 and glutamate 425.

The protein belongs to the class-II aminoacyl-tRNA synthetase family. Homodimer. Mg(2+) is required as a cofactor.

Its subcellular location is the cytoplasm. It catalyses the reaction tRNA(Lys) + L-lysine + ATP = L-lysyl-tRNA(Lys) + AMP + diphosphate. This Burkholderia mallei (strain NCTC 10247) protein is Lysine--tRNA ligase.